Here is a 259-residue protein sequence, read N- to C-terminus: HTH-type transcriptional regulator Rv1931c (259 aa).

A compositionally biased stretch (basic residues) spans 104–121 (SHRRHRPRAGTGRRRPRH). The tract at residues 104–170 (SHRRHRPRAG…GAGGHRGRAG (67 aa)) is disordered. Positions 174-257 (RIGELAQRAA…GISPDQYRKA (84 aa)) constitute an HTH araC/xylS-type domain. 2 DNA-binding regions (H-T-H motif) span residues 176–197 (GELAQRAAMSPRHFTRVFSDEV) and 224–247 (VVAIAARCGFGTAETMRRSFIRRV).

Controls the expression of genes important for virulence. This is HTH-type transcriptional regulator Rv1931c from Mycobacterium tuberculosis (strain ATCC 25618 / H37Rv).